A 286-amino-acid chain; its full sequence is uncharacterized protein (286 aa).

One can recognise an Integrase catalytic domain in the interval 1 to 146; it reads MSRYKKDNDG…KPVDVERGDF (146 aa). Residues 252 to 263 are compositionally biased toward basic residues; that stretch reads RKVKAKKGKKDK. Residues 252 to 286 are disordered; it reads RKVKAKKGKKDKKLKESKKSDDTSTGASTGSSIAM. Basic and acidic residues predominate over residues 264 to 273; it reads KLKESKKSDD. Residues 274–286 show a composition bias toward low complexity; the sequence is TSTGASTGSSIAM.

This is an uncharacterized protein from Caenorhabditis elegans.